A 55-amino-acid polypeptide reads, in one-letter code: Neurotoxin BmKX-A1-S31 (55 aa).

An N-terminal signal peptide occupies residues 1–23 (MKIFFAVLVILVLFSMLIWTAYG). 3 disulfides stabilise this stretch: C30–C45, C36–C50, and C39–C53.

In terms of tissue distribution, expressed by the venom gland.

The protein localises to the secreted. The polypeptide is Neurotoxin BmKX-A1-S31 (Olivierus martensii (Manchurian scorpion)).